The primary structure comprises 203 residues: Urease accessory protein UreG (203 aa).

A GTP-binding site is contributed by 14–21 (GPVGSGKT).

The protein belongs to the SIMIBI class G3E GTPase family. UreG subfamily. Homodimer. UreD, UreF and UreG form a complex that acts as a GTP-hydrolysis-dependent molecular chaperone, activating the urease apoprotein by helping to assemble the nickel containing metallocenter of UreC. The UreE protein probably delivers the nickel.

Its subcellular location is the cytoplasm. In terms of biological role, facilitates the functional incorporation of the urease nickel metallocenter. This process requires GTP hydrolysis, probably effectuated by UreG. The chain is Urease accessory protein UreG from Rhizobium etli (strain ATCC 51251 / DSM 11541 / JCM 21823 / NBRC 15573 / CFN 42).